The primary structure comprises 116 residues: Large ribosomal subunit protein bL20 (116 aa).

Belongs to the bacterial ribosomal protein bL20 family.

Functionally, binds directly to 23S ribosomal RNA and is necessary for the in vitro assembly process of the 50S ribosomal subunit. It is not involved in the protein synthesizing functions of that subunit. In Mycoplasmopsis pulmonis (strain UAB CTIP) (Mycoplasma pulmonis), this protein is Large ribosomal subunit protein bL20.